Here is a 472-residue protein sequence, read N- to C-terminus: WASH complex subunit 1 (472 aa).

The required for WASH complex assembly stretch occupies residues 1-51 (MPQNRSMESQAYSLPLILPDLRREEAIHQITDTLQHLQTVSNDIFSRILQR). Disordered stretches follow at residues 289–365 (ENSR…SDGR), 377–412 (GIGK…GDLM), and 426–472 (ISGK…DWES). 2 stretches are compositionally biased toward pro residues: residues 301 to 319 (LPPP…PPEP) and 327 to 336 (SLAPPLPIPA). The interval 352-472 (QGAPKEVVNP…GDGDEEDWES (121 aa)) is VCA. The region spanning 364–386 (GRASLLESIRQAGGIGKAKLRNV) is the WH2 domain. A compositionally biased stretch (basic and acidic residues) spans 385–401 (NVKEKKLEKKKMKEQEQ).

It belongs to the WASH1 family. In terms of assembly, component of the WASH complex.

The protein localises to the early endosome membrane. It is found in the recycling endosome membrane. In terms of biological role, acts as a nucleation-promoting factor at the surface of endosomes, where it recruits and activates the Arp2/3 complex to induce actin polymerization, playing a key role in the fission of tubules that serve as transport intermediates during endosome sorting. The chain is WASH complex subunit 1 from Xenopus tropicalis (Western clawed frog).